We begin with the raw amino-acid sequence, 155 residues long: UPF0178 protein Amet_2995 (155 aa).

Belongs to the UPF0178 family.

This Alkaliphilus metalliredigens (strain QYMF) protein is UPF0178 protein Amet_2995.